A 383-amino-acid polypeptide reads, in one-letter code: 8-amino-7-oxononanoate synthase (383 aa).

Substrate is bound at residue Arg-23. 110-111 (GF) is a binding site for pyridoxal 5'-phosphate. Residue His-135 coordinates substrate. The pyridoxal 5'-phosphate site is built by Ser-181, His-209, and Thr-235. At Lys-238 the chain carries N6-(pyridoxal phosphate)lysine. Thr-351 contributes to the substrate binding site.

The protein belongs to the class-II pyridoxal-phosphate-dependent aminotransferase family. BioF subfamily. In terms of assembly, homodimer. Pyridoxal 5'-phosphate is required as a cofactor.

It catalyses the reaction 6-carboxyhexanoyl-[ACP] + L-alanine + H(+) = (8S)-8-amino-7-oxononanoate + holo-[ACP] + CO2. It functions in the pathway cofactor biosynthesis; biotin biosynthesis. In terms of biological role, catalyzes the decarboxylative condensation of pimeloyl-[acyl-carrier protein] and L-alanine to produce 8-amino-7-oxononanoate (AON), [acyl-carrier protein], and carbon dioxide. The sequence is that of 8-amino-7-oxononanoate synthase from Aliivibrio salmonicida (strain LFI1238) (Vibrio salmonicida (strain LFI1238)).